Reading from the N-terminus, the 60-residue chain is Large ribosomal subunit protein bL32 (60 aa).

Residues 1 to 43 (MAVQQNRKTRSRRGMRRSHDALTGKTLSVDSTTGEKHLRHHVT) are disordered. Positions 7–16 (RKTRSRRGMR) are enriched in basic residues.

It belongs to the bacterial ribosomal protein bL32 family.

In Saccharophagus degradans (strain 2-40 / ATCC 43961 / DSM 17024), this protein is Large ribosomal subunit protein bL32.